The primary structure comprises 546 residues: Chaperonin GroEL (546 aa).

ATP is bound by residues 29-32 (TMGP), Lys-50, 86-90 (DGTTT), Gly-414, and Asp-492.

This sequence belongs to the chaperonin (HSP60) family. In terms of assembly, forms a cylinder of 14 subunits composed of two heptameric rings stacked back-to-back. Interacts with the co-chaperonin GroES.

It localises to the cytoplasm. It catalyses the reaction ATP + H2O + a folded polypeptide = ADP + phosphate + an unfolded polypeptide.. Together with its co-chaperonin GroES, plays an essential role in assisting protein folding. The GroEL-GroES system forms a nano-cage that allows encapsulation of the non-native substrate proteins and provides a physical environment optimized to promote and accelerate protein folding. This is Chaperonin GroEL from Helicobacter pylori (strain HPAG1).